The following is a 299-amino-acid chain: Dermonecrotic toxin LiSicTox-alphaIVA1 (299 aa).

The first 18 residues, 1-18 (MLFPTALIFGCWALVIEG), serve as a signal peptide directing secretion. Histidine 30 is a catalytic residue. Mg(2+)-binding residues include glutamate 50 and aspartate 52. The Nucleophile role is filled by histidine 66. 2 disulfide bridges follow: cysteine 70/cysteine 76 and cysteine 72/cysteine 217. Position 110 (aspartate 110) interacts with Mg(2+).

The protein belongs to the arthropod phospholipase D family. Class II subfamily. Class IIa sub-subfamily. Requires Mg(2+) as cofactor. As to expression, expressed by the venom gland.

Its subcellular location is the secreted. The enzyme catalyses an N-(acyl)-sphingosylphosphocholine = an N-(acyl)-sphingosyl-1,3-cyclic phosphate + choline. The catalysed reaction is an N-(acyl)-sphingosylphosphoethanolamine = an N-(acyl)-sphingosyl-1,3-cyclic phosphate + ethanolamine. It carries out the reaction a 1-acyl-sn-glycero-3-phosphocholine = a 1-acyl-sn-glycero-2,3-cyclic phosphate + choline. It catalyses the reaction a 1-acyl-sn-glycero-3-phosphoethanolamine = a 1-acyl-sn-glycero-2,3-cyclic phosphate + ethanolamine. Functionally, dermonecrotic toxins cleave the phosphodiester linkage between the phosphate and headgroup of certain phospholipids (sphingolipid and lysolipid substrates), forming an alcohol (often choline) and a cyclic phosphate. This toxin acts on sphingomyelin (SM) with high activity. It may also act on ceramide phosphoethanolamine (CPE), lysophosphatidylcholine (LPC) and lysophosphatidylethanolamine (LPE), but not on lysophosphatidylserine (LPS), and lysophosphatidylglycerol (LPG). It acts by transphosphatidylation, releasing exclusively cyclic phosphate products as second products. Has hemolytic activity in human erythrocytes in a dose-dependent manner. In vivo, this toxin induces dermonecrosis, edema, hemorrhage, massive inflammatory response, as well as vascular permeability. In addition, thrombus formation has also been detected in dermal blood vessels. It also induces platelet aggregation. It is noteworthy that a Glu-248 replaces the Asp present in paralogs, without decrease in catalytic and hemolytic activities. This chain is Dermonecrotic toxin LiSicTox-alphaIVA1, found in Loxosceles intermedia (Brown spider).